We begin with the raw amino-acid sequence, 160 residues long: Endoribonuclease YbeY (160 aa).

His-121, His-125, and His-131 together coordinate Zn(2+).

It belongs to the endoribonuclease YbeY family. It depends on Zn(2+) as a cofactor.

Its subcellular location is the cytoplasm. In terms of biological role, single strand-specific metallo-endoribonuclease involved in late-stage 70S ribosome quality control and in maturation of the 3' terminus of the 16S rRNA. The chain is Endoribonuclease YbeY from Syntrophus aciditrophicus (strain SB).